We begin with the raw amino-acid sequence, 400 residues long: Large envelope protein (400 aa).

N-acetylmethionine is present on methionine 1. 2 disordered regions span residues 1-20 (MGGWSSKPRKGMGTNLSVPN) and 88-115 (VSTIPPPASTNRQSGRQPTPISPPLRDS). The N-myristoyl glycine; by host moiety is linked to residue glycine 2. Positions 2-119 (GGWSSKPRKG…PPLRDSHPQA (118 aa)) are pre-S1. A pre-S region spans residues 2–174 (GGWSSKPRKG…SARTGDPVTN (173 aa)). Residues 2 to 181 (GGWSSKPRKG…VTNMENITSG (180 aa)) lie on the Virion surface; in external conformation side of the membrane. Topologically, residues 2 to 253 (GGWSSKPRKG…PGYRWMCLRR (252 aa)) are intravirion; in internal conformation. A glycan (N-linked (GlcNAc...) asparagine) is linked at tryptophan 4. A compositionally biased stretch (polar residues) spans 88–106 (VSTIPPPASTNRQSGRQPT). The interval 120–174 (MQWNSTAFHQTLQDPRVRGLYLPAGGSSSGTVNPAPNIASHISSISARTGDPVTN) is pre-S2. The chain crosses the membrane as a helical span at residues 182-202 (FLGPLLVLQAGFFLLTRILTI). Residues 203–253 (PQSLDSWWTSLNFLGGSPVCLGQNSQSPTSNHSPTSCPPICPGYRWMCLRR) are Intravirion; in external conformation-facing. The chain crosses the membrane as a helical span at residues 254–274 (FIIFLFILLLCLIFLLVLLDY). Over 275 to 348 (QGMLPVCPLI…WASVRFSWLS (74 aa)) the chain is Virion surface. Asparagine 320 carries an N-linked (GlcNAc...) asparagine; by host glycan. The helical transmembrane segment at 349–369 (LLVPFVQWFVGLSPTVWLSAI) threads the bilayer. The Intravirion portion of the chain corresponds to 370–375 (WMMWYW). A helical transmembrane segment spans residues 376 to 398 (GPSLYSIVRPFIPLLPIFFCLWV). Residues 399–400 (YI) lie on the Virion surface side of the membrane.

It belongs to the orthohepadnavirus major surface antigen family. In terms of assembly, in its internal form (Li-HBsAg), interacts with the capsid protein and with the isoform S. Interacts with host chaperone CANX. Associates with host chaperone CANX through its pre-S2 N glycan; this association may be essential for isoform M proper secretion. As to quaternary structure, interacts with isoform L. Interacts with the antigens of satellite virus HDV (HDVAgs); this interaction is required for encapsidation of HDV genomic RNA. Isoform M is N-terminally acetylated by host at a ratio of 90%, and N-glycosylated by host at the pre-S2 region. In terms of processing, myristoylated.

The protein resides in the virion membrane. In terms of biological role, the large envelope protein exists in two topological conformations, one which is termed 'external' or Le-HBsAg and the other 'internal' or Li-HBsAg. In its external conformation the protein attaches the virus to cell receptors and thereby initiating infection. This interaction determines the species specificity and liver tropism. This attachment induces virion internalization predominantly through caveolin-mediated endocytosis. The large envelope protein also assures fusion between virion membrane and endosomal membrane. In its internal conformation the protein plays a role in virion morphogenesis and mediates the contact with the nucleocapsid like a matrix protein. Functionally, the middle envelope protein plays an important role in the budding of the virion. It is involved in the induction of budding in a nucleocapsid independent way. In this process the majority of envelope proteins bud to form subviral lipoprotein particles of 22 nm of diameter that do not contain a nucleocapsid. The polypeptide is Large envelope protein (Homo sapiens (Human)).